Reading from the N-terminus, the 496-residue chain is MTNKTLMIQGTTSDAGKSTLVTAICRSLLRRGVKVAPFKPQNMALNSAVTVDGGEIGRAQAVQAQACGLQPHTDMNPVLLKPNTDIGAQVIIHGKARANMDAVAYHDYKRTAMQAVLESFQRLSSAYDAVLVEGAGSPAEINLRDRDIANMGFAEEVDCPVILVADIDRGGVFAHLVGTLALLSESEQRRVRGFVINRFRGDIALLEPGLRWLEEYTGKPVLGVLPYLNGLHLEAEDALPRDSIVKSDATLKVIAPALPRISNHTDFDPLRLHPQVDFQFIGPGQSPPPADLIILPGSKSVRNDLQWLRENGWEEVIRKHLRYGGRVIGICGGYQMLGRSIADPHGLEGVAGESVGLGWLDIATTLEPEKQLRRVEGRLWLDDARITGYEIHAGVTRCLASQTSAVCLEDGRLDGVVSDDNQVLGLYLHGLFESPQALTALLRWAGLNEVQRLDYDALREADINRLADVVDQYLNWEEIAGFLQVGPNSDDRESRA.

The region spanning 250–437 (TLKVIAPALP…LHGLFESPQA (188 aa)) is the GATase cobBQ-type domain. Cysteine 331 serves as the catalytic Nucleophile. Histidine 429 is an active-site residue.

The protein belongs to the CobB/CobQ family. CobQ subfamily.

The protein operates within cofactor biosynthesis; adenosylcobalamin biosynthesis. In terms of biological role, catalyzes amidations at positions B, D, E, and G on adenosylcobyrinic A,C-diamide. NH(2) groups are provided by glutamine, and one molecule of ATP is hydrogenolyzed for each amidation. This chain is Cobyric acid synthase, found in Hahella chejuensis (strain KCTC 2396).